Here is a 365-residue protein sequence, read N- to C-terminus: UPF0718 protein MJ0584 (365 aa).

11 consecutive transmembrane segments (helical) span residues 6 to 26, 32 to 52, 67 to 87, 108 to 128, 130 to 150, 174 to 194, 201 to 221, 245 to 265, 282 to 302, 308 to 328, and 344 to 364; these read MSFIMNIINVMINTIIDYLNV, LLMAFLMAGGIASMINKNFII, VAAVSGSLLAVCSCTILPLFA, AINVLAIFYSAALLGWDIGFL, AVFAVVVSILIGLSMEIIFKS, ITFFALQFIMLLVITASPKLF, LYDGFLLKHLLFIILGIILAV, IVFPLLIIGVAIAGAIKAIIP, FIASFIGALMYFATLTEVPII, LGMGVGPAMALLLAGPSLSIP, and TYLGLVVIFSTICGYIAGIIL.

This sequence belongs to the UPF0718 family.

The protein resides in the cell membrane. The polypeptide is UPF0718 protein MJ0584 (Methanocaldococcus jannaschii (strain ATCC 43067 / DSM 2661 / JAL-1 / JCM 10045 / NBRC 100440) (Methanococcus jannaschii)).